A 393-amino-acid chain; its full sequence is S-adenosylmethionine synthase 1 (393 aa).

Glutamate 9 contributes to the Mg(2+) binding site. An ATP-binding site is contributed by histidine 15. Glutamate 43 is a K(+) binding site. Glutamate 56 and glutamine 99 together coordinate L-methionine. ATP contacts are provided by residues 167 to 169 (DGK), 235 to 238 (SGRF), aspartate 246, 252 to 253 (RK), alanine 269, lysine 273, and lysine 277. Aspartate 246 is an L-methionine binding site. Residue lysine 277 coordinates L-methionine.

Belongs to the AdoMet synthase family. Homotetramer. Mn(2+) serves as cofactor. Mg(2+) is required as a cofactor. Requires Co(2+) as cofactor. It depends on K(+) as a cofactor.

It localises to the cytoplasm. It catalyses the reaction L-methionine + ATP + H2O = S-adenosyl-L-methionine + phosphate + diphosphate. The protein operates within amino-acid biosynthesis; S-adenosyl-L-methionine biosynthesis; S-adenosyl-L-methionine from L-methionine: step 1/1. Functionally, catalyzes the formation of S-adenosylmethionine from methionine and ATP. The reaction comprises two steps that are both catalyzed by the same enzyme: formation of S-adenosylmethionine (AdoMet) and triphosphate, and subsequent hydrolysis of the triphosphate. This is S-adenosylmethionine synthase 1 (METK1) from Picea sitchensis (Sitka spruce).